Consider the following 555-residue polypeptide: Disabled homolog 1 (555 aa).

Positions 1-26 (MSTETELQVAVKTSAKKDSRKKGQDR) are disordered. The span at 15-26 (AKKDSRKKGQDR) shows a compositional bias: basic and acidic residues. Residues 36–189 (KGEGVRYKAK…CEQAVYQTIL (154 aa)) enclose the PID domain. Phosphotyrosine occurs at positions 198, 220, and 232. Disordered stretches follow at residues 386–409 (PLAT…PRQK) and 469–555 (LTPV…QDGS). Residues 391 to 403 (PGTNDSARSSPQS) are compositionally biased toward polar residues. Low complexity-rich tracts occupy residues 470–479 (TPVTSTTPST) and 490–501 (SSPSKSSASHVS). S491 carries the phosphoserine; by CDK5 modification. Positions 504 to 513 (TADDIFEEGF) are enriched in acidic residues.

Associates with the SH2 domains of SRC, FYN and ABL. Interacts (phosphorylated on tyrosine residues) with CRK and CRKL (via respective SH2 domain). Interacts with SIAH1, LRP8 and VLDLR. Interacts with LRP1. Interacts with APLP1 (via NPXY motif). Interacts with DAB2IP. Interacts with ZSWIM8. In terms of processing, phosphorylated by FYN on Tyr-198 and Tyr-220 upon reelin induction in embryonic neurons. Also phosphorylated on Ser-491 independently of reelin signaling. Post-translationally, ubiquitinated by various cullin-5-RING E3 ubiquitin-protein ligase complexes (ECS complexes) following ligand-binding and phosphorylation, leading to its degradation. Ubiquitinated by the ECS(SOCS7) complex in the cortical plate of the developing cerebral cortex following ligand-binding and phosphorylation by FYN, leading to its degradation by the proteasome. Recognized by ZSWIM8 through a disorder targets misorder mechanism that eliminates misfolded DAB1 via ubiquitination and proteasomal degradation.

It is found in the cytoplasm. In terms of biological role, signaling adapter of the reelin-mediated signaling pathway, which regulates the migration and differentiation of postmitotic neurons during brain development. Mediates intracellular transduction of Reelin signaling following reelin (RELN)-binding to its receptor: acts by docking proteins through its phosphotyrosine residues and PID domain. The chain is Disabled homolog 1 (Dab1) from Rattus norvegicus (Rat).